The sequence spans 280 residues: tRNA pseudouridine synthase A (280 aa).

The Nucleophile role is filled by Asp-60. Position 119 (Tyr-119) interacts with substrate.

The protein belongs to the tRNA pseudouridine synthase TruA family. Homodimer.

The catalysed reaction is uridine(38/39/40) in tRNA = pseudouridine(38/39/40) in tRNA. Formation of pseudouridine at positions 38, 39 and 40 in the anticodon stem and loop of transfer RNAs. The chain is tRNA pseudouridine synthase A from Treponema pallidum (strain Nichols).